Reading from the N-terminus, the 144-residue chain is Transcription antitermination protein NusB (144 aa).

It belongs to the NusB family.

Its function is as follows. Involved in transcription antitermination. Required for transcription of ribosomal RNA (rRNA) genes. Binds specifically to the boxA antiterminator sequence of the ribosomal RNA (rrn) operons. The sequence is that of Transcription antitermination protein NusB from Buchnera aphidicola subsp. Baizongia pistaciae (strain Bp).